A 225-amino-acid polypeptide reads, in one-letter code: Uracil-DNA glycosylase (225 aa).

The active-site Proton acceptor is aspartate 65.

This sequence belongs to the uracil-DNA glycosylase (UDG) superfamily. UNG family.

It localises to the cytoplasm. It carries out the reaction Hydrolyzes single-stranded DNA or mismatched double-stranded DNA and polynucleotides, releasing free uracil.. Functionally, excises uracil residues from the DNA which can arise as a result of misincorporation of dUMP residues by DNA polymerase or due to deamination of cytosine. In Bacillus anthracis (strain A0248), this protein is Uracil-DNA glycosylase.